Consider the following 427-residue polypeptide: Transcriptional enhancer factor TEF-3 (427 aa).

Residues 1 to 32 (MTSNEWSSPDSPEGSSISGGSQALDKPIDNDA) form a disordered region. Residues 7-21 (SSPDSPEGSSISGGS) show a composition bias toward low complexity. The segment at residues 29-105 (DNDAEGVWSP…QVLARRKARE (77 aa)) is a DNA-binding region (TEA). A Nuclear localization signal motif is present at residues 78 to 94 (IKLRTGKTRTRKQVSSH). The disordered stretch occupies residues 163 to 206 (QPGTSHDVKPFSQNTYPVQPPLPLPGFESPAGPTPSPSAPLAPP). Residues 194-205 (GPTPSPSAPLAP) show a composition bias toward pro residues.

Interacts with WWTR1/TAZ. Interacts with YAP1. As to expression, preferentially expressed in lung and in skeletal muscle.

The protein localises to the nucleus. In terms of biological role, transcription factor which plays a key role in the Hippo signaling pathway, a pathway involved in organ size control and tumor suppression by restricting proliferation and promoting apoptosis. The core of this pathway is composed of a kinase cascade wherein MST1/MST2, in complex with its regulatory protein SAV1, phosphorylates and activates LATS1/2 in complex with its regulatory protein MOB1, which in turn phosphorylates and inactivates YAP1 oncoprotein and WWTR1/TAZ. Acts by mediating gene expression of YAP1 and WWTR1/TAZ, thereby regulating cell proliferation, migration and epithelial mesenchymal transition (EMT) induction. Binds specifically and non-cooperatively to the Sph and GT-IIC 'enhansons' (5'-GTGGAATGT-3') and activates transcription. Binds to the M-CAT motif. Might play a role in the embryonic development of skeletal muscle. This Mus musculus (Mouse) protein is Transcriptional enhancer factor TEF-3 (Tead4).